Reading from the N-terminus, the 390-residue chain is Fer-related kinase 1 (390 aa).

The 97-residue stretch at 23-119 folds into the SH2 domain; the sequence is YYHGMVPRQD…ASGAKIRRPM (97 aa). Residues 131 to 386 form the Protein kinase domain; the sequence is IVANKKLGEG…SIHKKLREFY (256 aa). ATP-binding positions include 137-145 and lysine 161; that span reads LGEGAFGDV. Aspartate 252 serves as the catalytic Proton acceptor.

Belongs to the protein kinase superfamily. Tyr protein kinase family. Fes/fps subfamily. As to quaternary structure, interacts with hmp-2. Mn(2+) serves as cofactor.

It localises to the nucleus. The protein localises to the cytoplasm. The protein resides in the cell junction. Its subcellular location is the cell membrane. It catalyses the reaction L-tyrosyl-[protein] + ATP = O-phospho-L-tyrosyl-[protein] + ADP + H(+). Functionally, non-receptor tyrosine-protein kinase which plays a role in morphogenesis by regulating the epidermal enclosure of the embryo, independently of its kinase activity. Prevents hyperactivation of the Wnt signaling pathway during endoderm development, probably by preventing hmp-2 nuclear translocation. This Caenorhabditis elegans protein is Fer-related kinase 1.